We begin with the raw amino-acid sequence, 90 residues long: Barstar (90 aa).

Belongs to the barstar family.

Its subcellular location is the cytoplasm. In terms of biological role, inhibitor of the ribonuclease barnase. Forms a one-to-one non-covalent complex. In Bacillus amyloliquefaciens (Bacillus velezensis), this protein is Barstar.